We begin with the raw amino-acid sequence, 376 residues long: Putative phosphoserine aminotransferase (376 aa).

A disordered region spans residues 1–30 (MADQLTPSLDIPAALKPRDGRFGSGPSKVR). Position 50 (arginine 50) interacts with L-glutamate. Pyridoxal 5'-phosphate is bound by residues 84–85 (AT), phenylalanine 108, threonine 154, aspartate 176, and glutamine 199. Lysine 200 is subject to N6-(pyridoxal phosphate)lysine. Pyridoxal 5'-phosphate is bound at residue 251 to 252 (NT).

Belongs to the class-V pyridoxal-phosphate-dependent aminotransferase family. SerC subfamily. In terms of assembly, homodimer. Requires pyridoxal 5'-phosphate as cofactor.

The protein localises to the cytoplasm. The catalysed reaction is O-phospho-L-serine + 2-oxoglutarate = 3-phosphooxypyruvate + L-glutamate. It catalyses the reaction 4-(phosphooxy)-L-threonine + 2-oxoglutarate = (R)-3-hydroxy-2-oxo-4-phosphooxybutanoate + L-glutamate. The protein operates within amino-acid biosynthesis; L-serine biosynthesis; L-serine from 3-phospho-D-glycerate: step 2/3. It participates in cofactor biosynthesis; pyridoxine 5'-phosphate biosynthesis; pyridoxine 5'-phosphate from D-erythrose 4-phosphate: step 3/5. Its function is as follows. Catalyzes the reversible conversion of 3-phosphohydroxypyruvate to phosphoserine and of 3-hydroxy-2-oxo-4-phosphonooxybutanoate to phosphohydroxythreonine. The chain is Putative phosphoserine aminotransferase from Mycobacterium leprae (strain TN).